A 362-amino-acid polypeptide reads, in one-letter code: D-alanine--D-alanine ligase (362 aa).

One can recognise an ATP-grasp domain in the interval 153–357; that stretch reads KKIAREAGIP…YADLLTTLVS (205 aa). 180–235 lines the ATP pocket; that stretch reads RELLGLPVFVKPARGGSSIGISKVDSWRDLPAAIEEAASHDPKVIIEAMITGPEVE. Mg(2+)-binding residues include aspartate 312, glutamate 324, and asparagine 326.

This sequence belongs to the D-alanine--D-alanine ligase family. It depends on Mg(2+) as a cofactor. The cofactor is Mn(2+).

The protein resides in the cytoplasm. It carries out the reaction 2 D-alanine + ATP = D-alanyl-D-alanine + ADP + phosphate + H(+). It functions in the pathway cell wall biogenesis; peptidoglycan biosynthesis. Functionally, cell wall formation. In Corynebacterium urealyticum (strain ATCC 43042 / DSM 7109), this protein is D-alanine--D-alanine ligase.